The following is a 95-amino-acid chain: Aspartyl/glutamyl-tRNA(Asn/Gln) amidotransferase subunit C (95 aa).

The protein belongs to the GatC family. In terms of assembly, heterotrimer of A, B and C subunits.

It catalyses the reaction L-glutamyl-tRNA(Gln) + L-glutamine + ATP + H2O = L-glutaminyl-tRNA(Gln) + L-glutamate + ADP + phosphate + H(+). The enzyme catalyses L-aspartyl-tRNA(Asn) + L-glutamine + ATP + H2O = L-asparaginyl-tRNA(Asn) + L-glutamate + ADP + phosphate + 2 H(+). Functionally, allows the formation of correctly charged Asn-tRNA(Asn) or Gln-tRNA(Gln) through the transamidation of misacylated Asp-tRNA(Asn) or Glu-tRNA(Gln) in organisms which lack either or both of asparaginyl-tRNA or glutaminyl-tRNA synthetases. The reaction takes place in the presence of glutamine and ATP through an activated phospho-Asp-tRNA(Asn) or phospho-Glu-tRNA(Gln). The sequence is that of Aspartyl/glutamyl-tRNA(Asn/Gln) amidotransferase subunit C from Citrifermentans bemidjiense (strain ATCC BAA-1014 / DSM 16622 / JCM 12645 / Bem) (Geobacter bemidjiensis).